The following is a 383-amino-acid chain: Chaperone protein DnaJ (383 aa).

Residues 5-70 (DYYELLGVEK…QKRAAYDRFG (66 aa)) form the J domain. A CR-type zinc finger spans residues 137 to 215 (GKTATVKVPS…CGGSGRTRKE (79 aa)). Residues C150, C153, C167, C170, C189, C192, C203, and C206 each contribute to the Zn(2+) site. 4 CXXCXGXG motif repeats span residues 150–157 (CEDCKGTG), 167–174 (CSACHGHG), 189–196 (CPTCQGMG), and 203–210 (CRSCGGSG).

Belongs to the DnaJ family. Homodimer. Requires Zn(2+) as cofactor.

The protein localises to the cytoplasm. Participates actively in the response to hyperosmotic and heat shock by preventing the aggregation of stress-denatured proteins and by disaggregating proteins, also in an autonomous, DnaK-independent fashion. Unfolded proteins bind initially to DnaJ; upon interaction with the DnaJ-bound protein, DnaK hydrolyzes its bound ATP, resulting in the formation of a stable complex. GrpE releases ADP from DnaK; ATP binding to DnaK triggers the release of the substrate protein, thus completing the reaction cycle. Several rounds of ATP-dependent interactions between DnaJ, DnaK and GrpE are required for fully efficient folding. Also involved, together with DnaK and GrpE, in the DNA replication of plasmids through activation of initiation proteins. The sequence is that of Chaperone protein DnaJ from Paramagnetospirillum magneticum (strain ATCC 700264 / AMB-1) (Magnetospirillum magneticum).